We begin with the raw amino-acid sequence, 335 residues long: MTEIATTSGISSVGLLSVGAYRPTRVVTNDEICENIDSSDEWIYSRTGIKTRRFAAPEESAASMAIEASREAIAKAALTGSDIDGVIVATSTHFLQTPACAPIVAAALGCQNVPAFDISAGCSGFGHALGIAADMIRGGSAATILVIGTEKLSPTVDMTDRSNCFIFADGAASVLVGHSPIQGIGPTVWGSDGEQAAAIRQDIDWISHAENPAGPRPFLRMEGTAVFRWAAFEMGKVGQQAMDAAGVKPDEIDVFIPHQANSRINELLTKNLQLRPDAVIANDIEHTGNTSAASIPLAMAELLATGAAKPGDLALLIGYGAGLSYAAQVVRMPNS.

Active-site residues include Cys-122 and His-258. Residues 259 to 263 (QANSR) form an ACP-binding region. Asn-289 is a catalytic residue.

This sequence belongs to the thiolase-like superfamily. FabH family. Homodimer.

Its subcellular location is the cytoplasm. It catalyses the reaction malonyl-[ACP] + dodecanoyl-CoA + H(+) = 3-oxotetradecanoyl-[ACP] + CO2 + CoA. The protein operates within lipid metabolism; fatty acid biosynthesis. Its pathway is lipid metabolism; mycolic acid biosynthesis. Functionally, catalyzes the condensation reaction of fatty acid synthesis by the addition to an acyl acceptor of two carbons from malonyl-ACP. Catalyzes the first condensation reaction which initiates fatty acid synthesis and may therefore play a role in governing the total rate of fatty acid production. Possesses both acetoacetyl-ACP synthase and acetyl transacylase activities. Its substrate specificity determines the biosynthesis of branched-chain and/or straight-chain of fatty acids. The chain is Mycobacterial beta-ketoacyl-[acyl-carrier-protein] synthase III from Mycobacterium marinum (strain ATCC BAA-535 / M).